The sequence spans 339 residues: Serpentine receptor class r-10 (339 aa).

Residues 1-11 (MSGELWITLVD) lie on the Extracellular side of the membrane. A helical transmembrane segment spans residues 12–32 (TADIVGVTLTFCVNIVLLGLL). The Cytoplasmic portion of the chain corresponds to 33–42 (KTRGKNLGTY). Residues 43-63 (KYLMAFFSVFSIFYAIIEFIL) form a helical membrane-spanning segment. Residues 64 to 92 (RPIMHIENTTFFLISRKRFNYSTKLGKIN) are Extracellular-facing. Asn71 and Asn83 each carry an N-linked (GlcNAc...) asparagine glycan. The helical transmembrane segment at 93–113 (SAFYCACFATSFVVSGVHFVY) threads the bilayer. Residues 114 to 131 (RYFATCKPNLLRLFNLPT) are Cytoplasmic-facing. The helical transmembrane segment at 132–152 (LLLWPLGCSVPVTMWASVSYF) threads the bilayer. Residues 153 to 201 (LYPDTEYTEAAVTNVLNNHYNWIKKENVSYIAYVYYQYENGVRHIYLKN) lie on the Extracellular side of the membrane. The N-linked (GlcNAc...) asparagine glycan is linked to Asn179. Residues 202-222 (LLGCFVHYFVMSMTFVVMFYC) traverse the membrane as a helical segment. Residues 223–254 (GYATWKTMNEHKDVSDRTRALQKQLFKALVLQ) lie on the Cytoplasmic side of the membrane. A helical transmembrane segment spans residues 255 to 275 (TLIPTIFMYAPTGVMFIAPFF). Residues 276 to 284 (DVNLNANAN) lie on the Extracellular side of the membrane. The helical transmembrane segment at 285-305 (FIVFCSFLYPGLDPLILILII) threads the bilayer. Residues 306–339 (RDFRRTIFNFLCGKKNSVDESRSTTRANLSQVPT) are Cytoplasmic-facing.

The protein belongs to the nematode receptor-like protein str family. In terms of assembly, interacts with odr-4. As to expression, strongly expressed in the sensory cilia of AWA olfactory neurons, and at low levels in the CEP neurons.

It localises to the cell projection. Its subcellular location is the cilium membrane. An odorant receptor which affects chemotaxis to the volatile odorant diacetyl. Specifies AWA neuronal cell fate via the odr-7 pathway. The polypeptide is Serpentine receptor class r-10 (Caenorhabditis elegans).